The primary structure comprises 89 residues: Cell division topological specificity factor (89 aa).

This sequence belongs to the MinE family.

Prevents the cell division inhibition by proteins MinC and MinD at internal division sites while permitting inhibition at polar sites. This ensures cell division at the proper site by restricting the formation of a division septum at the midpoint of the long axis of the cell. The sequence is that of Cell division topological specificity factor from Paracoccus denitrificans (strain Pd 1222).